The primary structure comprises 303 residues: Phosphatidylglycerol--prolipoprotein diacylglyceryl transferase (303 aa).

The next 4 helical transmembrane spans lie at L18–L38, L58–E78, I106–F126, and E133–G153. R154 contacts a 1,2-diacyl-sn-glycero-3-phospho-(1'-sn-glycerol). 3 helical membrane-spanning segments follow: residues P193–F213, L223–I243, and I266–Y286.

This sequence belongs to the Lgt family.

It is found in the cell inner membrane. The enzyme catalyses L-cysteinyl-[prolipoprotein] + a 1,2-diacyl-sn-glycero-3-phospho-(1'-sn-glycerol) = an S-1,2-diacyl-sn-glyceryl-L-cysteinyl-[prolipoprotein] + sn-glycerol 1-phosphate + H(+). The protein operates within protein modification; lipoprotein biosynthesis (diacylglyceryl transfer). Its function is as follows. Catalyzes the transfer of the diacylglyceryl group from phosphatidylglycerol to the sulfhydryl group of the N-terminal cysteine of a prolipoprotein, the first step in the formation of mature lipoproteins. The protein is Phosphatidylglycerol--prolipoprotein diacylglyceryl transferase of Prochlorococcus marinus (strain NATL2A).